The following is a 194-amino-acid chain: MNWLPESFYARPALVVARELLGALLVVEEGGQRRVGRIVETEAYIGEHDLACHAAKGLTPRTEVMFGPAGVAYVYLIYGMHHCFNVVTDATGAGAAVLVRAVEPVEGLPPGTRTDGPGRLCKALGLTRAHNRRGLCTPVLHLRPGTPVPESAVSRGPRIGVDYAGTWAAEPFRLWVRDSQHVSKGPPPGRRKPA.

It belongs to the DNA glycosylase MPG family.

The protein is Putative 3-methyladenine DNA glycosylase of Myxococcus xanthus (strain DK1622).